Reading from the N-terminus, the 342-residue chain is Aldo-keto reductase pigE (342 aa).

The first 27 residues, 1-27 (MGSISPKTRFPIVLGAGLIGSPGLFEG), serve as a signal peptide directing secretion. An NADP(+)-binding site is contributed by Asp-52. Tyr-57 serves as the catalytic Proton donor. NADP(+) is bound by residues Gln-182 and Arg-236. Residue Asn-271 is glycosylated (N-linked (GlcNAc...) asparagine).

This sequence belongs to the aldo/keto reductase family. Aldo/keto reductase 2 subfamily.

The protein operates within secondary metabolite biosynthesis. Aldo-keto reductase; part of the gene cluster that mediates the biosynthesis of azaphilone pigments (MonAzPs), a complex mixture of compounds with a common azaphilone skeleton very widely used as food colorants. Within the pathway, pigE is involved in the dehydration of the C-11 alcohol followed by the reduction of the C6(7) double bond which increases the electrophilicity of the C-5 ketone of the resulting acyl benzopyran and allows the intramolecular Knoevenagel aldol condensation with the C-20 enol of the side chain to yield the characteristic linear tricyclic carbon skeletons of the yellow pigments. The first step of the pathway is performed by the nrPKS pigA that forms the hexaketide precursor from successive condensations of five malonyl-CoA units, with a simple acetyl-CoA starter unit. The role of esterase pigG is not clear, but it may play at most a supplementary role in the formation of the benzaldehyde produced by the pigA nrPKS. This very reactive benzaldehyde is intercepted by the pigC ketoreductase that to provide the first stable enzyme-free MonAzPs intermediate, 6-(4-hydroxy-2-oxopentyl)-3-methyl-2,4-dioxocyclohexane carbaldehyde, also known as M7PKS-1. The FAD-dependent monooxygenase pigN hydroxylates M7PKS-1 at C-4, which triggers the formation of the pyran ring. PigJ, pigK and pigD are involved in the acetylation of the pyran ring. PigJ and pigK form the two subunits of a dedicated fungal FAS that produces the side chain fatty acyl moiety of MonAzPs and pigD transfers the fatty acyl chain to the C-4 alcohol. PigM and pigO are involved in the elimination of the omega-1 alcohol. PigM acts as an O-acetyltransferase that synthesizes the putative O-11 acetyl intermediate whereas pigO eliminates acetic acid to yield an intermediate with a C10(11) double bond. The dehydration of the C-11 alcohol followed by the reduction of the C6(7) double bond by the NAD(P)H-dependent oxidoreductase pigE increases the electrophilicity of the C-5 ketone of the resulting acyl benzopyran. This in turn sets up the C-5 ketone for an intramolecular Knoevenagel aldol condensation with the C-20 enol of the side chain. This condensation affords the characteristic linear tricyclic carbon skeletons of the yellow pigments that serve as the common precursors for the classical yellow pigments monascin and ankaflavin, orange pigments rubopunctatin and monascorubrin, and red pigments ribropunctamine and monascorubramine. The FAD-dependent oxidoreductase pigF is especially invoved in the biosynthesis of orange and red pigments via desaturation of C6(7). This chain is Aldo-keto reductase pigE, found in Monascus ruber (Mold).